We begin with the raw amino-acid sequence, 640 residues long: Threonine--tRNA ligase (640 aa).

One can recognise a TGS domain in the interval 1–61; the sequence is MPIITLPDGS…DRDATLQIIT (61 aa). The catalytic stretch occupies residues 242 to 533; the sequence is DHRRIGKQLD…LIEHYAGAFP (292 aa). Zn(2+) is bound by residues cysteine 333, histidine 384, and histidine 510.

Belongs to the class-II aminoacyl-tRNA synthetase family. Homodimer. It depends on Zn(2+) as a cofactor.

It localises to the cytoplasm. The enzyme catalyses tRNA(Thr) + L-threonine + ATP = L-threonyl-tRNA(Thr) + AMP + diphosphate + H(+). Catalyzes the attachment of threonine to tRNA(Thr) in a two-step reaction: L-threonine is first activated by ATP to form Thr-AMP and then transferred to the acceptor end of tRNA(Thr). Also edits incorrectly charged L-seryl-tRNA(Thr). The polypeptide is Threonine--tRNA ligase (Pseudomonas aeruginosa (strain LESB58)).